The primary structure comprises 234 residues: 1-(5-phosphoribosyl)-5-[(5-phosphoribosylamino)methylideneamino] imidazole-4-carboxamide isomerase (234 aa).

D9 functions as the Proton acceptor in the catalytic mechanism. The active-site Proton donor is the D131.

Belongs to the HisA/HisF family.

The protein localises to the cytoplasm. It carries out the reaction 1-(5-phospho-beta-D-ribosyl)-5-[(5-phospho-beta-D-ribosylamino)methylideneamino]imidazole-4-carboxamide = 5-[(5-phospho-1-deoxy-D-ribulos-1-ylimino)methylamino]-1-(5-phospho-beta-D-ribosyl)imidazole-4-carboxamide. It participates in amino-acid biosynthesis; L-histidine biosynthesis; L-histidine from 5-phospho-alpha-D-ribose 1-diphosphate: step 4/9. In Staphylococcus aureus (strain NCTC 8325 / PS 47), this protein is 1-(5-phosphoribosyl)-5-[(5-phosphoribosylamino)methylideneamino] imidazole-4-carboxamide isomerase.